The following is a 155-amino-acid chain: Shadow of prion protein (155 aa).

An N-terminal signal peptide occupies residues 1-27 (MSGMNQVVATCWTCLLLSAFLCEPVLS). A disordered region spans residues 29–71 (GGRGGSRGSSRGSHSRSPKAGGYRGGGPHNGGTRGSRYRGRSS). A compositionally biased stretch (gly residues) spans 50–62 (GYRGGGPHNGGTR). Asn113 carries an N-linked (GlcNAc...) asparagine glycan. Ser125 carries the GPI-anchor amidated serine lipid modification. Positions 126–155 (TQNGSSLSQLVSIIIATFSPKYGLLMDSIL) are cleaved as a propeptide — removed in mature form. Asn128 is a glycosylation site (N-linked (GlcNAc...) asparagine).

This sequence belongs to the SPRN family.

The protein resides in the cell membrane. Its function is as follows. Prion-like protein that has PrP(C)-like neuroprotective activity. The chain is Shadow of prion protein (sprn) from Gasterosteus aculeatus (Three-spined stickleback).